A 178-amino-acid polypeptide reads, in one-letter code: MKLLAPVLWAMAALGVTWLVAVDSKESCTKHSNGCSTPLRLPCQEYFRPACDIHDNCYHCGTIFGISRKECDDAFLKDMNTLCKKLGSNSATCPARGKREVTSHRATSIAHSRLWKTALDQKSFLNRKARQAILLTPNSCLYWANNFYMAVHVFGARSYSRTTDPKDCQGLKHCLPNH.

An N-terminal signal peptide occupies residues 1 to 24 (MKLLAPVLWAMAALGVTWLVAVDS). 4-hydroxyproline; partial occurs at positions 38, 42, and 49. The active site involves His-54. A propeptide spans 98-130 (KREVTSHRATSIAHSRLWKTALDQKSFLNRKAR) (interchain peptide). Gln-131 carries the post-translational modification Pyrrolidone carboxylic acid. At Pro-137 the chain carries 4-hydroxyproline; partial.

The protein belongs to the phospholipase A2 family. Group IX subfamily. Heterodimer of an alpha and a beta chain; probably disulfide-linked. Requires Ca(2+) as cofactor. As to expression, expressed by the venom duct.

It is found in the secreted. The catalysed reaction is a 1,2-diacyl-sn-glycero-3-phosphocholine + H2O = a 1-acyl-sn-glycero-3-phosphocholine + a fatty acid + H(+). Its function is as follows. Catalyzes the calcium-dependent hydrolysis of the 2-acyl groups in 3-sn-phosphoglycerides. The protein is Conodipine-P1 of Conus purpurascens (Purple cone).